A 447-amino-acid polypeptide reads, in one-letter code: D-ribitol-5-phosphate cytidylyltransferase (447 aa).

This sequence belongs to the IspD/TarI cytidylyltransferase family. IspD subfamily. Homodimer.

It is found in the cytoplasm. The protein localises to the cytosol. It carries out the reaction D-ribitol 5-phosphate + CTP + H(+) = CDP-L-ribitol + diphosphate. The catalysed reaction is D-ribose 5-phosphate + CTP + H(+) = CDP-D-ribose + diphosphate. The enzyme catalyses D-ribulose 5-phosphate + CTP + H(+) = CDP-D-ribulose + diphosphate. It functions in the pathway protein modification; protein glycosylation. In terms of biological role, cytidylyltransferase required for protein O-linked mannosylation. Catalyzes the formation of CDP-ribitol nucleotide sugar from D-ribitol 5-phosphate. CDP-ribitol is a substrate of FKTN during the biosynthesis of the phosphorylated O-mannosyl trisaccharide (N-acetylgalactosamine-beta-3-N-acetylglucosamine-beta-4-(phosphate-6-)mannose), a carbohydrate structure present in alpha-dystroglycan (DAG1), which is required for binding laminin G-like domain-containing extracellular proteins with high affinity. Shows activity toward other pentose phosphate sugars and mediates formation of CDP-ribulose or CDP-ribose using CTP and ribulose-5-phosphate or ribose-5-phosphate, respectively. Not involved in dolichol production. This Mus musculus (Mouse) protein is D-ribitol-5-phosphate cytidylyltransferase (Crppa).